A 284-amino-acid polypeptide reads, in one-letter code: MKLVIVSGRSGSGKSVALRVLEDLGYYCVDNLPLPLIGSLLAQLKSSNDLVAISVDVRNIAEQGKVLEQQLALLPPETEISSFFLNSSDKVLLKRFSETRRLHPLSRSQMSLQEAIKLEGRLLEPIAKMVDHHIDTSLLNVYELSDQVRQILLGSVDKELVINIESFGFKHGMPTEADFMFDVRFLPNPHWETELRPLTGLDVPVQEFLARQPLVHKLIWQIENLFETWMPHLERNNRSYLTIAIGCTGGQHRSVYIADQLAKRFANGKHVVNARHRELGDVKA.

8-15 (GRSGSGKS) contacts ATP. Residue 56–59 (DVRN) coordinates GTP.

Belongs to the RapZ-like family.

Functionally, displays ATPase and GTPase activities. This Shewanella denitrificans (strain OS217 / ATCC BAA-1090 / DSM 15013) protein is Nucleotide-binding protein Sden_0486.